Reading from the N-terminus, the 1643-residue chain is Histone transcription regulator 3 homolog (1643 aa).

2 disordered regions span residues Glu311–Glu370 and Pro1598–Lys1629. Residues Thr324 to Glu343 are compositionally biased toward basic and acidic residues. Residues Pro345–Arg354 are compositionally biased toward polar residues. Basic and acidic residues predominate over residues Glu361 to Glu370.

Belongs to the HIR3 family.

The protein resides in the nucleus. Its function is as follows. Has a role in a nucleosome assembly pathway that is required for the integrity of heterochromatin and proper chromosome segregation. This chain is Histone transcription regulator 3 homolog (HIR3), found in Eremothecium gossypii (strain ATCC 10895 / CBS 109.51 / FGSC 9923 / NRRL Y-1056) (Yeast).